The sequence spans 113 residues: Ribonuclease P protein component (113 aa).

This sequence belongs to the RnpA family. In terms of assembly, consists of a catalytic RNA component (M1 or rnpB) and a protein subunit.

It carries out the reaction Endonucleolytic cleavage of RNA, removing 5'-extranucleotides from tRNA precursor.. Functionally, RNaseP catalyzes the removal of the 5'-leader sequence from pre-tRNA to produce the mature 5'-terminus. It can also cleave other RNA substrates such as 4.5S RNA. The protein component plays an auxiliary but essential role in vivo by binding to the 5'-leader sequence and broadening the substrate specificity of the ribozyme. The polypeptide is Ribonuclease P protein component (Finegoldia magna (strain ATCC 29328 / DSM 20472 / WAL 2508) (Peptostreptococcus magnus)).